Here is a 361-residue protein sequence, read N- to C-terminus: MSQTYQQQLQSKIERITHQFAEFNPPALEVFESPEQHFRMRAEFRIWHTDNDLFYAMFERNEDGKQKEVIRVDEFPIADQSINQLMPRLLEELKANPTLSQRIFEADFLTTLSGEMLVTLIYHRKLDTEWESAAKALAEKLNIKIMGRSRGQKVIIGDDYVVEQLNVHGRTFKYKQIESSFTQPNAEVCQKMLTWACDVIQGSNQDLLELYCGNGNFTLPLSLHFRRVLATELAKSSVYAAQWNIEQNQIENIQIARLSAEEFTQAYQGEREFRRLQEANIDIQSYEFDTIFVDPPRAGIDDETLKLLKGFKRILYISCNPDTLYNNLKTLSQTHKITRFALFDQFPFTHHVESGVLLELI.

Glutamine 183, tyrosine 211, asparagine 216, glutamate 232, and aspartate 294 together coordinate S-adenosyl-L-methionine. Catalysis depends on cysteine 319, which acts as the Nucleophile. Glutamate 353 acts as the Proton acceptor in catalysis.

It belongs to the class I-like SAM-binding methyltransferase superfamily. RNA M5U methyltransferase family. TrmA subfamily.

The catalysed reaction is uridine(54) in tRNA + S-adenosyl-L-methionine = 5-methyluridine(54) in tRNA + S-adenosyl-L-homocysteine + H(+). It catalyses the reaction uridine(341) in tmRNA + S-adenosyl-L-methionine = 5-methyluridine(341) in tmRNA + S-adenosyl-L-homocysteine + H(+). Functionally, dual-specificity methyltransferase that catalyzes the formation of 5-methyluridine at position 54 (m5U54) in all tRNAs, and that of position 341 (m5U341) in tmRNA (transfer-mRNA). The chain is tRNA/tmRNA (uracil-C(5))-methyltransferase from Acinetobacter baylyi (strain ATCC 33305 / BD413 / ADP1).